We begin with the raw amino-acid sequence, 241 residues long: Fatty acid metabolism regulator protein (241 aa).

The region spanning 11–79 is the HTH gntR-type domain; it reads QSPAALAEEY…HGKPTKVNNI (69 aa). The H-T-H motif DNA-binding region spans 39-58; sequence ERDLADKIGVTRTTLREVLQ.

In terms of assembly, homodimer.

It localises to the cytoplasm. Multifunctional regulator of fatty acid metabolism. The polypeptide is Fatty acid metabolism regulator protein (Haemophilus influenzae (strain PittEE)).